A 544-amino-acid chain; its full sequence is WD repeat-containing protein 25 (544 aa).

Disordered stretches follow at residues 17–74 and 183–208; these read DSDS…EDPG and QRQALSTETGKGKDVEPQGPPAGRAP. Polar residues predominate over residues 30–39; sequence FNATGQQKDT. 7 WD repeats span residues 244–286, 290–329, 330–373, 375–420, 424–463, 469–510, and 513–544; these read GHRG…HCLQ, LHTEAVRAARWAPCGRRILSGGFDFALHLTDLETGTQLFS, GRSD…RSYK, TIQQ…KISN, HERFTCPSLALHPREPVFLAQTNGNYLALFSTVWPYRMSR, GHKV…RACT, and GHTQACVGTTYHPVLPSVLATCSWGGDMKIWH.

As to expression, expressed in heart, muscle, testis, ovary, uterus and prostate.

In Homo sapiens (Human), this protein is WD repeat-containing protein 25.